The primary structure comprises 438 residues: Xylose isomerase (438 aa).

Residues His-100 and Asp-103 contribute to the active site. 7 residues coordinate Mg(2+): Glu-231, Glu-267, His-270, Asp-295, Asp-306, Asp-308, and Asp-338.

It belongs to the xylose isomerase family. As to quaternary structure, homotetramer. Requires Mg(2+) as cofactor.

Its subcellular location is the cytoplasm. It catalyses the reaction alpha-D-xylose = alpha-D-xylulofuranose. The chain is Xylose isomerase from Pseudomonas fluorescens (strain Pf0-1).